We begin with the raw amino-acid sequence, 125 residues long: Small ribosomal subunit protein eS8 (125 aa).

This sequence belongs to the eukaryotic ribosomal protein eS8 family. Part of the 30S ribosomal subunit.

In Methanosphaerula palustris (strain ATCC BAA-1556 / DSM 19958 / E1-9c), this protein is Small ribosomal subunit protein eS8.